An 89-amino-acid chain; its full sequence is Meiosis expressed gene 1 protein homolog (89 aa).

Belongs to the MEIG1 family.

This chain is Meiosis expressed gene 1 protein homolog, found in Nematostella vectensis (Starlet sea anemone).